Here is a 453-residue protein sequence, read N- to C-terminus: tRNA (guanine-N(7)-)-methyltransferase non-catalytic subunit TRM82 (453 aa).

The interval 69 to 99 (ENEEKGIKKSKTNEGNTIEKKHDAKIPVPGP) is disordered. WD repeat units follow at residues 103 to 143 (PIYS…NDNC) and 244 to 286 (GHKE…DEFD).

This sequence belongs to the WD repeat TRM82 family. In terms of assembly, forms a heterodimer with the catalytic subunit TRM8.

Its subcellular location is the nucleus. The protein operates within tRNA modification; N(7)-methylguanine-tRNA biosynthesis. Its function is as follows. Required for the formation of N(7)-methylguanine at position 46 (m7G46) in tRNA. In the complex, it is required to stabilize and induce conformational changes of the catalytic subunit. The protein is tRNA (guanine-N(7)-)-methyltransferase non-catalytic subunit TRM82 of Vanderwaltozyma polyspora (strain ATCC 22028 / DSM 70294 / BCRC 21397 / CBS 2163 / NBRC 10782 / NRRL Y-8283 / UCD 57-17) (Kluyveromyces polysporus).